A 314-amino-acid chain; its full sequence is Olfactory receptor 52H1 (314 aa).

Over 1–32 (MIIFNLSSYNPGPFILVGIPGLEQFHVWIGIP) the chain is Extracellular. N5 is a glycosylation site (N-linked (GlcNAc...) asparagine). A helical membrane pass occupies residues 33-53 (FCIIYIVAVVGNCILLYLIVV). Over 54–59 (EHSLHE) the chain is Cytoplasmic. A helical membrane pass occupies residues 60–80 (PMFFFLSMLAMTDLILSTAGV). Residues 81–101 (PKALSIFWLGAREITFPGCLT) lie on the Extracellular side of the membrane. C99 and C181 are joined by a disulfide. Residues 102 to 122 (QMFFLHYNFVLDSAILMAMAF) traverse the membrane as a helical segment. Topologically, residues 123–149 (DHYVAICSPLRYTTILTPKTIIKSAMG) are cytoplasmic. A helical transmembrane segment spans residues 150–170 (ISFRSFCIILPDVFLLTCLPF). The Extracellular portion of the chain corresponds to 171 to 197 (CRTRIIPHTYCEHIGVAQLACADISIN). Residues 198 to 218 (FWYGFCVPIMTVISDVILIAV) traverse the membrane as a helical segment. Over 219 to 242 (SYAHILCAVFGLPSQDACQKALGT) the chain is Cytoplasmic. Residues 243 to 263 (CGSHVCVILMFYTPAFFSILA) form a helical membrane-spanning segment. Residues 264–275 (HRFGHNVSRTFH) lie on the Extracellular side of the membrane. A glycan (N-linked (GlcNAc...) asparagine) is linked at N269. The chain crosses the membrane as a helical span at residues 276 to 296 (IMFANLYIVIPPALNPMVYGV). Residues 297-314 (KTKQIRDKVILLFSKGTG) are Cytoplasmic-facing.

The protein belongs to the G-protein coupled receptor 1 family.

It is found in the membrane. Its function is as follows. Odorant receptor. In Homo sapiens (Human), this protein is Olfactory receptor 52H1 (OR52H1).